Consider the following 113-residue polypeptide: Large ribosomal subunit protein uL24 (113 aa).

It belongs to the universal ribosomal protein uL24 family. Part of the 50S ribosomal subunit.

In terms of biological role, one of two assembly initiator proteins, it binds directly to the 5'-end of the 23S rRNA, where it nucleates assembly of the 50S subunit. One of the proteins that surrounds the polypeptide exit tunnel on the outside of the subunit. The protein is Large ribosomal subunit protein uL24 of Chlamydia felis (strain Fe/C-56) (Chlamydophila felis).